The following is a 94-amino-acid chain: Small ribosomal subunit protein uS17 (94 aa).

Residues 1-22 (MASSSTEGQAAARGRKKSWTGK) form a disordered region.

The protein belongs to the universal ribosomal protein uS17 family. As to quaternary structure, part of the 30S ribosomal subunit.

Functionally, one of the primary rRNA binding proteins, it binds specifically to the 5'-end of 16S ribosomal RNA. This Chlorobium luteolum (strain DSM 273 / BCRC 81028 / 2530) (Pelodictyon luteolum) protein is Small ribosomal subunit protein uS17.